Here is a 274-residue protein sequence, read N- to C-terminus: Large ribosomal subunit protein uL2 (274 aa).

The tract at residues 221–274 is disordered; that stretch reads RGTAMNPVDHPHGGGEGRNFGKHPVTPWGVQTKGKKTRSNKRTDKFIVRRRSKK.

The protein belongs to the universal ribosomal protein uL2 family. Part of the 50S ribosomal subunit. Forms a bridge to the 30S subunit in the 70S ribosome.

In terms of biological role, one of the primary rRNA binding proteins. Required for association of the 30S and 50S subunits to form the 70S ribosome, for tRNA binding and peptide bond formation. It has been suggested to have peptidyltransferase activity; this is somewhat controversial. Makes several contacts with the 16S rRNA in the 70S ribosome. This is Large ribosomal subunit protein uL2 from Yersinia enterocolitica.